Consider the following 321-residue polypeptide: Ubiquitin carboxyl-terminal hydrolase ubh-4 (321 aa).

The region spanning Ser-6–Pro-220 is the UCH catalytic domain. Cys-83 serves as the catalytic Nucleophile. His-158 acts as the Proton donor in catalysis. The ULD domain maps to Asn-273–Ala-301.

The protein belongs to the peptidase C12 family. Interacts with proteasome 19S subunit rpn-13. As to expression, highly expressed in intestine and to a lesser extent in other tissues including muscles and neurons.

The catalysed reaction is Thiol-dependent hydrolysis of ester, thioester, amide, peptide and isopeptide bonds formed by the C-terminal Gly of ubiquitin (a 76-residue protein attached to proteins as an intracellular targeting signal).. In terms of biological role, ubiquitin-protein hydrolase involved both in the processing of ubiquitin precursors and of ubiquitinated proteins. This enzyme is a thiol protease that recognizes and hydrolyzes a peptide bond at the C-terminal glycine of ubiquitin. The chain is Ubiquitin carboxyl-terminal hydrolase ubh-4 from Caenorhabditis elegans.